Here is a 504-residue protein sequence, read N- to C-terminus: DNA-binding protein reb1 (504 aa).

The disordered stretch occupies residues 30–51 (DFDDFPLNKGLKTNNNDYSGSI). HTH myb-type domains lie at 308–361 (NPFE…RFGD) and 362–422 (KLKR…KAAS). 2 consecutive DNA-binding regions (H-T-H motif) follow at residues 335 to 357 (WTKIGRKMARMPNDCRDRWRDVV) and 395 to 418 (WTLVAQMLGTRTRLQCRYKFQQLT).

The protein localises to the nucleus. In terms of biological role, DNA-binding protein that recognizes sites within both the enhancer and the promoter of rRNA transcription, as well as upstream of many genes transcribed by RNA polymerase II. Has a role in the termination of RNA polymerase I catalyzed transcription. The protein is DNA-binding protein reb1 (reb1) of Schizosaccharomyces pombe (strain 972 / ATCC 24843) (Fission yeast).